Reading from the N-terminus, the 257-residue chain is MLIIPAIDLKDGHCVRLKQGVMENVTVFSEDPAAMARHWLDQGARRLHLVDLNGAFAGKPKNELAIRDIVDAIGDEIPTQLGGGIRDLETIERYLDDGITYIIIGTAAVKTPGFLHDACNAFPGHIMVGLDAKDGKVAVNGWSKVTGHDVVDLAKKFEDYGVEAIIYTDIGRDGMLSGVNLKATLELARALTIPVIASGGVSSLDDVKALCEMEPEGIAGAITGRAIYEGTLDFKVAQELADELSTQSSPRDTTILF.

D8 (proton acceptor) is an active-site residue. The active-site Proton donor is D131.

The protein belongs to the HisA/HisF family.

Its subcellular location is the cytoplasm. The catalysed reaction is 1-(5-phospho-beta-D-ribosyl)-5-[(5-phospho-beta-D-ribosylamino)methylideneamino]imidazole-4-carboxamide = 5-[(5-phospho-1-deoxy-D-ribulos-1-ylimino)methylamino]-1-(5-phospho-beta-D-ribosyl)imidazole-4-carboxamide. It participates in amino-acid biosynthesis; L-histidine biosynthesis; L-histidine from 5-phospho-alpha-D-ribose 1-diphosphate: step 4/9. The chain is 1-(5-phosphoribosyl)-5-[(5-phosphoribosylamino)methylideneamino] imidazole-4-carboxamide isomerase from Nitrosospira multiformis (strain ATCC 25196 / NCIMB 11849 / C 71).